A 308-amino-acid polypeptide reads, in one-letter code: 1D-myo-inositol 2-acetamido-2-deoxy-alpha-D-glucopyranoside deacetylase (308 aa).

Zn(2+) contacts are provided by H37, D40, and H171.

This sequence belongs to the MshB deacetylase family. Zn(2+) is required as a cofactor.

It carries out the reaction 1D-myo-inositol 2-acetamido-2-deoxy-alpha-D-glucopyranoside + H2O = 1D-myo-inositol 2-amino-2-deoxy-alpha-D-glucopyranoside + acetate. Functionally, catalyzes the deacetylation of 1D-myo-inositol 2-acetamido-2-deoxy-alpha-D-glucopyranoside (GlcNAc-Ins) in the mycothiol biosynthesis pathway. The protein is 1D-myo-inositol 2-acetamido-2-deoxy-alpha-D-glucopyranoside deacetylase of Mycobacterium sp. (strain KMS).